A 369-amino-acid polypeptide reads, in one-letter code: Glutamate 5-kinase (369 aa).

K9 is an ATP binding site. Substrate is bound by residues S49, D136, and N148. ATP is bound by residues 168-169 and 210-216; these read TD and TGGMLTK. Residues 275 to 355 enclose the PUA domain; sequence QGSIWVDKGA…KGVLIYRDDW (81 aa).

Belongs to the glutamate 5-kinase family.

The protein localises to the cytoplasm. It catalyses the reaction L-glutamate + ATP = L-glutamyl 5-phosphate + ADP. The protein operates within amino-acid biosynthesis; L-proline biosynthesis; L-glutamate 5-semialdehyde from L-glutamate: step 1/2. Its function is as follows. Catalyzes the transfer of a phosphate group to glutamate to form L-glutamate 5-phosphate. The sequence is that of Glutamate 5-kinase from Streptococcus pneumoniae (strain 70585).